A 306-amino-acid chain; its full sequence is Aspartate carbamoyltransferase catalytic subunit (306 aa).

Arg-55 and Thr-56 together coordinate carbamoyl phosphate. Lys-84 is an L-aspartate binding site. Positions 105, 133, and 136 each coordinate carbamoyl phosphate. 2 residues coordinate L-aspartate: Arg-166 and Arg-227. Carbamoyl phosphate-binding residues include Leu-265 and Pro-266.

It belongs to the aspartate/ornithine carbamoyltransferase superfamily. ATCase family. In terms of assembly, heterododecamer (2C3:3R2) of six catalytic PyrB chains organized as two trimers (C3), and six regulatory PyrI chains organized as three dimers (R2).

It carries out the reaction carbamoyl phosphate + L-aspartate = N-carbamoyl-L-aspartate + phosphate + H(+). It functions in the pathway pyrimidine metabolism; UMP biosynthesis via de novo pathway; (S)-dihydroorotate from bicarbonate: step 2/3. In terms of biological role, catalyzes the condensation of carbamoyl phosphate and aspartate to form carbamoyl aspartate and inorganic phosphate, the committed step in the de novo pyrimidine nucleotide biosynthesis pathway. The protein is Aspartate carbamoyltransferase catalytic subunit of Aeromonas salmonicida (strain A449).